The chain runs to 481 residues: Cardiolipin synthase A (481 aa).

2 helical membrane passes run 10 to 30 and 40 to 60; these read FFGY…LHAL and IAWA…YLIF. 2 PLD phosphodiesterase domains span residues 220–247 and 394–421; these read VNFR…GDEY and QPGF…DNRS. Catalysis depends on residues histidine 225, lysine 227, aspartate 232, histidine 399, lysine 401, and aspartate 406.

Belongs to the phospholipase D family. Cardiolipin synthase subfamily. ClsA sub-subfamily.

The protein resides in the cell inner membrane. It catalyses the reaction 2 a 1,2-diacyl-sn-glycero-3-phospho-(1'-sn-glycerol) = a cardiolipin + glycerol. Its function is as follows. Catalyzes the reversible phosphatidyl group transfer from one phosphatidylglycerol molecule to another to form cardiolipin (CL) (diphosphatidylglycerol) and glycerol. This is Cardiolipin synthase A from Pseudomonas putida (strain ATCC 47054 / DSM 6125 / CFBP 8728 / NCIMB 11950 / KT2440).